A 534-amino-acid chain; its full sequence is Chaperonin GroEL (534 aa).

Residues 29-32 (TAGP), 86-90 (DGTTT), Gly-413, and Asp-494 contribute to the ATP site.

Belongs to the chaperonin (HSP60) family. In terms of assembly, forms a cylinder of 14 subunits composed of two heptameric rings stacked back-to-back. Interacts with the co-chaperonin GroES.

It localises to the cytoplasm. The catalysed reaction is ATP + H2O + a folded polypeptide = ADP + phosphate + an unfolded polypeptide.. Functionally, together with its co-chaperonin GroES, plays an essential role in assisting protein folding. The GroEL-GroES system forms a nano-cage that allows encapsulation of the non-native substrate proteins and provides a physical environment optimized to promote and accelerate protein folding. This is Chaperonin GroEL from Mycoplasmoides gallisepticum (strain R(low / passage 15 / clone 2)) (Mycoplasma gallisepticum).